The following is a 313-amino-acid chain: Beta-ketoacyl-[acyl-carrier-protein] synthase III (313 aa).

Catalysis depends on residues Cys-112 and His-238. Residues 239–243 (QANIR) form an ACP-binding region. Asn-268 is a catalytic residue.

It belongs to the thiolase-like superfamily. FabH family. Homodimer.

The protein resides in the cytoplasm. The catalysed reaction is malonyl-[ACP] + acetyl-CoA + H(+) = 3-oxobutanoyl-[ACP] + CO2 + CoA. It functions in the pathway lipid metabolism; fatty acid biosynthesis. In terms of biological role, catalyzes the condensation reaction of fatty acid synthesis by the addition to an acyl acceptor of two carbons from malonyl-ACP. Catalyzes the first condensation reaction which initiates fatty acid synthesis and may therefore play a role in governing the total rate of fatty acid production. Possesses both acetoacetyl-ACP synthase and acetyl transacylase activities. Its substrate specificity determines the biosynthesis of branched-chain and/or straight-chain of fatty acids. The protein is Beta-ketoacyl-[acyl-carrier-protein] synthase III of Staphylococcus aureus (strain bovine RF122 / ET3-1).